Reading from the N-terminus, the 715-residue chain is BBSome complex member BBS7 (715 aa).

Residue M1 is modified to N-acetylmethionine.

As to quaternary structure, part of BBSome complex, that contains BBS1, BBS2, BBS4, BBS5, BBS7, BBS8/TTC8, BBS9 and BBIP10. Interacts with BBS2 (via C-terminus). Interacts with CCDC28B. Interacts with SMO; the interaction is indicative for the association of SMO with the BBsome complex to facilitate ciliary localization of SMO.

The protein resides in the cell projection. Its subcellular location is the cilium membrane. It localises to the cytoplasm. The protein localises to the cytoskeleton. It is found in the microtubule organizing center. The protein resides in the centrosome. Its subcellular location is the centriolar satellite. It localises to the cilium basal body. Its function is as follows. The BBSome complex is thought to function as a coat complex required for sorting of specific membrane proteins to the primary cilia. The BBSome complex is required for ciliogenesis but is dispensable for centriolar satellite function. This ciliogenic function is mediated in part by the Rab8 GDP/GTP exchange factor, which localizes to the basal body and contacts the BBSome. Rab8(GTP) enters the primary cilium and promotes extension of the ciliary membrane. Firstly the BBSome associates with the ciliary membrane and binds to RAB3IP/Rabin8, the guanosyl exchange factor (GEF) for Rab8 and then the Rab8-GTP localizes to the cilium and promotes docking and fusion of carrier vesicles to the base of the ciliary membrane. The BBSome complex, together with the LTZL1, controls SMO ciliary trafficking and contributes to the sonic hedgehog (SHH) pathway regulation. Required for BBSome complex ciliary localization but not for the proper complex assembly. This Mus musculus (Mouse) protein is BBSome complex member BBS7 (Bbs7).